A 35-amino-acid polypeptide reads, in one-letter code: Water stress-responsive protein 7 (35 aa).

The polypeptide is Water stress-responsive protein 7 (Pinus pinaster (Maritime pine)).